The following is a 222-amino-acid chain: Large ribosomal subunit protein mL64 (222 aa).

Disordered regions lie at residues 14–40 (LTAT…PWWP) and 188–222 (KRLK…APSS). A coiled-coil region spans residues 144 to 213 (EKAQADKERR…AALAAAAAQD (70 aa)). A Nuclear localization signal motif is present at residues 184–200 (KKERKRLKEEKQRQKQE). The span at 188-201 (KRLKEEKQRQKQEA) shows a compositional bias: basic and acidic residues. Low complexity predominate over residues 202 to 216 (RAAALAAAAAQDPAA).

This sequence belongs to the mitochondrion-specific ribosomal protein mL64 family. In terms of assembly, component of the mitochondrial ribosome large subunit (39S) which comprises a 16S rRNA and about 50 distinct proteins. Interacts with GADD45A, GADD45B and GADD45G. Interacts with NR4A1 via the NR4A1 AB domain. Interacts with ATAD3A and ATAD3B.

The protein localises to the mitochondrion. It is found in the nucleus. Functionally, acts as a negative regulator of G1 to S cell cycle phase progression by inhibiting cyclin-dependent kinases. Inhibitory effects are additive with GADD45 proteins but also occur in the absence of GADD45 proteins. Acts as a repressor of the orphan nuclear receptor NR4A1 by inhibiting AB domain-mediated transcriptional activity. May be involved in the hormone-mediated regulation of NR4A1 transcriptional activity. May play a role in mitochondrial protein synthesis. The chain is Large ribosomal subunit protein mL64 (GADD45GIP1) from Chlorocebus aethiops (Green monkey).